Reading from the N-terminus, the 104-residue chain is Protein METHYLENE BLUE SENSITIVITY 2 (104 aa).

The segment covering M1 to T11 has biased composition (basic residues). Disordered stretches follow at residues M1 to K46 and I64 to K104. 2 stretches are compositionally biased toward basic and acidic residues: residues R36–K46 and L73–H82.

It is found in the nucleus. The protein resides in the cytoplasm. The protein localises to the stress granule. Required for acclimation to reactive oxygen species (ROS) responses downstream of beta-cyclocitral, including singlet oxygen 1O(2) detoxification reactions, especially upon light-mediated photooxidative stress, and leading to programmed cell death. Prevents leaf senescence. The chain is Protein METHYLENE BLUE SENSITIVITY 2 from Arabidopsis thaliana (Mouse-ear cress).